The chain runs to 144 residues: Large ribosomal subunit protein uL16 (144 aa).

Basic residues predominate over residues 1-16 (MLVPKRVKHRKVQRGH). Residues 1 to 20 (MLVPKRVKHRKVQRGHMRGE) are disordered.

This sequence belongs to the universal ribosomal protein uL16 family. As to quaternary structure, part of the 50S ribosomal subunit.

Functionally, binds 23S rRNA and is also seen to make contacts with the A and possibly P site tRNAs. In Limosilactobacillus reuteri (strain DSM 20016) (Lactobacillus reuteri), this protein is Large ribosomal subunit protein uL16.